The primary structure comprises 161 residues: Probable calcium-binding protein CML16 (161 aa).

EF-hand domains are found at residues 8 to 43 (DQIK…LGIK), 44 to 79 (PRGD…DINE), 83 to 118 (INQE…MGHP), and 119 to 154 (LTYR…SAAD). Ca(2+) is bound by residues D21, D23, D25, S27, E32, D57, N59, N61, S63, E68, D96, D98, N100, S102, E107, D132, N134, D136, and E143.

Its function is as follows. Potential calcium sensor. The polypeptide is Probable calcium-binding protein CML16 (CML16) (Arabidopsis thaliana (Mouse-ear cress)).